The following is a 328-amino-acid chain: Trans-O-hydroxybenzylidenepyruvate hydratase-aldolase (328 aa).

This sequence belongs to the DapA family. As to quaternary structure, homotrimer.

The catalysed reaction is (3E)-4-(2-hydroxyphenyl)-2-oxobut-3-enoate + H2O = salicylaldehyde + pyruvate. It participates in aromatic compound metabolism; naphthalene degradation. Inhibited bye p-chloromercuribenzoate and salicylaldehyde. Activated by salicylate. Functionally, involved in the naphthalene and naphthalenesulfonate catabolic pathway. Catalyzes the transformation of trans-O-hydroxybenzylidenepyruvate (THBPA) to salicylaldehyde and pyruvate. The reaction is reversible. Can also use 2,4-dihydroxybenzalpyruvate (2,4-DHBP) and 2,6-dihydroxybenzalpyruvate (2,6-DHBP). The polypeptide is Trans-O-hydroxybenzylidenepyruvate hydratase-aldolase (nsaE) (Sphingobium xenophagum).